The primary structure comprises 420 residues: Gamma-glutamyl phosphate reductase (420 aa).

This sequence belongs to the gamma-glutamyl phosphate reductase family.

It is found in the cytoplasm. The catalysed reaction is L-glutamate 5-semialdehyde + phosphate + NADP(+) = L-glutamyl 5-phosphate + NADPH + H(+). Its pathway is amino-acid biosynthesis; L-proline biosynthesis; L-glutamate 5-semialdehyde from L-glutamate: step 2/2. Its function is as follows. Catalyzes the NADPH-dependent reduction of L-glutamate 5-phosphate into L-glutamate 5-semialdehyde and phosphate. The product spontaneously undergoes cyclization to form 1-pyrroline-5-carboxylate. The protein is Gamma-glutamyl phosphate reductase of Shewanella denitrificans (strain OS217 / ATCC BAA-1090 / DSM 15013).